Here is a 445-residue protein sequence, read N- to C-terminus: ATP-dependent protease ATPase subunit HslU (445 aa).

ATP contacts are provided by residues I17, 59-64 (GVGKTE), D254, E319, and R391.

It belongs to the ClpX chaperone family. HslU subfamily. In terms of assembly, a double ring-shaped homohexamer of HslV is capped on each side by a ring-shaped HslU homohexamer. The assembly of the HslU/HslV complex is dependent on binding of ATP.

The protein localises to the cytoplasm. ATPase subunit of a proteasome-like degradation complex; this subunit has chaperone activity. The binding of ATP and its subsequent hydrolysis by HslU are essential for unfolding of protein substrates subsequently hydrolyzed by HslV. HslU recognizes the N-terminal part of its protein substrates and unfolds these before they are guided to HslV for hydrolysis. The sequence is that of ATP-dependent protease ATPase subunit HslU from Pseudomonas savastanoi pv. phaseolicola (strain 1448A / Race 6) (Pseudomonas syringae pv. phaseolicola (strain 1448A / Race 6)).